Here is a 351-residue protein sequence, read N- to C-terminus: DNA polymerase IV (351 aa).

In terms of domain architecture, UmuC spans 4 to 185 (IIHVDMDCFF…LPLAKIPGVG (182 aa)). Positions 8 and 103 each coordinate Mg(2+). Glutamate 104 is an active-site residue.

Belongs to the DNA polymerase type-Y family. Monomer. Mg(2+) serves as cofactor.

The protein resides in the cytoplasm. It catalyses the reaction DNA(n) + a 2'-deoxyribonucleoside 5'-triphosphate = DNA(n+1) + diphosphate. In terms of biological role, poorly processive, error-prone DNA polymerase involved in untargeted mutagenesis. Copies undamaged DNA at stalled replication forks, which arise in vivo from mismatched or misaligned primer ends. These misaligned primers can be extended by PolIV. Exhibits no 3'-5' exonuclease (proofreading) activity. May be involved in translesional synthesis, in conjunction with the beta clamp from PolIII. The sequence is that of DNA polymerase IV from Salmonella choleraesuis (strain SC-B67).